The primary structure comprises 401 residues: Nodulation protein E (401 aa).

One can recognise a Ketosynthase family 3 (KS3) domain in the interval Asp-2 to Gln-400. Active-site for beta-ketoacyl synthase activity residues include Cys-162, His-294, and His-331. The helical transmembrane segment at His-329 to Ile-348 threads the bilayer.

The protein belongs to the thiolase-like superfamily. Beta-ketoacyl-ACP synthases family.

It localises to the cell inner membrane. Functionally, proposed to synthesize NOD factor fatty acyl chain. Involved in the synthesis of a highly unsaturated fatty acid moiety, which forms part of a lipo-oligosaccharide that is responsible for host specificity. The sequence is that of Nodulation protein E (nodE) from Rhizobium leguminosarum bv. trifolii.